A 213-amino-acid polypeptide reads, in one-letter code: LIM domain-containing protein PLIM2c (213 aa).

LIM zinc-binding domains lie at 9 to 69 (DKCK…LFKE) and 105 to 165 (DKCA…LFLE). Positions 177–213 (ANHRRSTAEEDKTEPKEDEANPTEEETSDAAAEEHES) are disordered. A compositionally biased stretch (basic and acidic residues) spans 182 to 195 (STAEEDKTEPKEDE).

In terms of assembly, interacts with F-actin. As to expression, exclusively expressed in pollen grains.

Its subcellular location is the cytoplasm. The protein resides in the cytoskeleton. In terms of biological role, binds to actin filaments and promotes cross-linking into thick bundles. Has an actin-stabilizing activity. Associates predominantly with long and dynamic actin bundles in the shank of growing pollen tubes. The actin regulatory activities are inhibited by pH &gt; 6.8 and/or high [Ca(2+)]. This chain is LIM domain-containing protein PLIM2c, found in Arabidopsis thaliana (Mouse-ear cress).